We begin with the raw amino-acid sequence, 257 residues long: Isoprenyl transferase (257 aa).

Residue Asp37 is part of the active site. Asp37 is a Mg(2+) binding site. Substrate contacts are provided by residues 38–41, Trp42, Arg50, His54, and 82–84; these read GNGR and STE. The Proton acceptor role is filled by Asn85. Substrate-binding positions include Trp86, Arg88, Arg205, and 211–213; that span reads RLS. Position 224 (Glu224) interacts with Mg(2+).

This sequence belongs to the UPP synthase family. As to quaternary structure, homodimer. Mg(2+) serves as cofactor.

Its function is as follows. Catalyzes the condensation of isopentenyl diphosphate (IPP) with allylic pyrophosphates generating different type of terpenoids. This chain is Isoprenyl transferase, found in Shouchella clausii (strain KSM-K16) (Alkalihalobacillus clausii).